The primary structure comprises 746 residues: Mediator of RNA polymerase II transcription subunit 25 (746 aa).

The interaction with the Mediator complex stretch occupies residues Met1–Leu226. Disordered stretches follow at residues Gly233–Gln273 and Gly298–Gly390. The segment covering Pro238 to Ala251 has biased composition (pro residues). The segment covering Pro252 to Gln262 has biased composition (low complexity). Over residues Pro329 to Ser342 the composition is skewed to pro residues. Low complexity predominate over residues Gln343–Pro354. An interaction with VP16 region spans residues Leu389 to Asn543. An interaction with CREBBP region spans residues Val395–Lys545. Residues Gln548–Ile746 are disordered. Interaction with RARA regions lie at residues Ala563 to Pro652 and Pro639 to Gln706. Residues Ala599–Ala610 are compositionally biased toward low complexity. Residues Pro611–Leu633 show a composition bias toward pro residues. The LXXLL motif signature appears at Leu645–Leu649. 3 stretches are compositionally biased toward pro residues: residues Asn651–Gln663, Pro672–His682, and Leu690–Gln701. An Asymmetric dimethylarginine modification is found at Arg724. The segment covering Met737–Ile746 has biased composition (acidic residues).

Belongs to the Mediator complex subunit 25 family. As to quaternary structure, component of the Mediator complex, which is composed of MED1, MED4, MED6, MED7, MED8, MED9, MED10, MED11, MED12, MED13, MED13L, MED14, MED15, MED16, MED17, MED18, MED19, MED20, MED21, MED22, MED23, MED24, MED25, MED26, MED27, MED29, MED30, MED31, CCNC, CDK8 and CDC2L6/CDK11. The MED12, MED13, CCNC and CDK8 subunits form a distinct module termed the CDK8 module. Mediator containing the CDK8 module is less active than Mediator lacking this module in supporting transcriptional activation. Individual preparations of the Mediator complex lacking one or more distinct subunits have been variously termed ARC, CRSP, DRIP, PC2, SMCC and TRAP. Interacts with CREBBP. Interacts with ESR1, GR, RARA, RXRA and THRB in a ligand-dependent fashion. Binds the Herpes simplex virus activator VP16.

It is found in the nucleus. Functionally, component of the Mediator complex, a coactivator involved in the regulated transcription of nearly all RNA polymerase II-dependent genes. Mediator functions as a bridge to convey information from gene-specific regulatory proteins to the basal RNA polymerase II transcription machinery. Mediator is recruited to promoters by direct interactions with regulatory proteins and serves as a scaffold for the assembly of a functional preinitiation complex with RNA polymerase II and the general transcription factors. Required for RARA/RXRA-mediated transcription. This Bos taurus (Bovine) protein is Mediator of RNA polymerase II transcription subunit 25 (MED25).